Consider the following 357-residue polypeptide: tRNA-specific 2-thiouridylase MnmA (357 aa).

Residues 7–14 (GMSGGVDS) and M33 contribute to the ATP site. Catalysis depends on C103, which acts as the Nucleophile. Cysteines 103 and 200 form a disulfide. An ATP-binding site is contributed by G127. Residues 150–152 (KDQ) are interaction with tRNA. C200 (cysteine persulfide intermediate) is an active-site residue. The interval 306–307 (RY) is interaction with tRNA.

It belongs to the MnmA/TRMU family.

Its subcellular location is the cytoplasm. It catalyses the reaction S-sulfanyl-L-cysteinyl-[protein] + uridine(34) in tRNA + AH2 + ATP = 2-thiouridine(34) in tRNA + L-cysteinyl-[protein] + A + AMP + diphosphate + H(+). Its function is as follows. Catalyzes the 2-thiolation of uridine at the wobble position (U34) of tRNA, leading to the formation of s(2)U34. This is tRNA-specific 2-thiouridylase MnmA from Lachnoclostridium phytofermentans (strain ATCC 700394 / DSM 18823 / ISDg) (Clostridium phytofermentans).